We begin with the raw amino-acid sequence, 159 residues long: Thioredoxin O2, mitochondrial (159 aa).

Ser40 carries the phosphoserine modification. A Thioredoxin domain is found at 43-159 (FAEGDRSSFV…LKSVMEQLYK (117 aa)). Active-site nucleophile residues include Cys83 and Cys86. Cys83 and Cys86 are oxidised to a cystine.

This sequence belongs to the thioredoxin family. Plant O-type subfamily.

Its subcellular location is the mitochondrion. Its function is as follows. Thiol-disulfide oxidoreductase that may participate in various redox reactions. Possesses insulin disulfide bonds reducing activity. Reduced by thioredoxin reductases NTRA and NTRB. The chain is Thioredoxin O2, mitochondrial from Arabidopsis thaliana (Mouse-ear cress).